A 594-amino-acid chain; its full sequence is Probable methylenetetrahydrofolate reductase (NADH) (594 aa).

The active-site Proton donor/acceptor is Glu21. Residues Glu21–Lys26 and Thr52–Trp53 each bind NAD(+). FAD-binding positions include Thr52–Trp53, His81, Arg111–Asp113, Tyr153, His157–Ala160, Asp175, and Lys182. Asp113 serves as a coordination point for substrate. Residues Gln193 and Tyr285 each coordinate substrate.

This sequence belongs to the methylenetetrahydrofolate reductase family. As to quaternary structure, homodimer. FAD serves as cofactor.

It carries out the reaction (6S)-5-methyl-5,6,7,8-tetrahydrofolate + NAD(+) = (6R)-5,10-methylene-5,6,7,8-tetrahydrofolate + NADH + H(+). The protein operates within one-carbon metabolism; tetrahydrofolate interconversion. Its activity is regulated as follows. Plant MTHFRs strongly prefer NADH over NADPH. Not inhibited by methionine or S-adenosylmethionine. In terms of biological role, the probable reversibility of the MTHFR reaction in plants suggests that they can metabolize the methyl group of 5,10-methylenetetrahydrofolate to serine, sugars and starch. This chain is Probable methylenetetrahydrofolate reductase (NADH), found in Oryza sativa subsp. japonica (Rice).